The sequence spans 473 residues: Cysteine--tRNA ligase (473 aa).

Position 27 (C27) interacts with Zn(2+). The 'HIGH' region motif lies at 29 to 39 (ITPYDHVHVGH). C213, H238, and E242 together coordinate Zn(2+). The 'KMSKS' region motif lies at 271–275 (KMSKS). ATP is bound at residue K274.

Belongs to the class-I aminoacyl-tRNA synthetase family. The cofactor is Zn(2+).

It localises to the cytoplasm. The enzyme catalyses tRNA(Cys) + L-cysteine + ATP = L-cysteinyl-tRNA(Cys) + AMP + diphosphate. The protein is Cysteine--tRNA ligase of Pyrobaculum calidifontis (strain DSM 21063 / JCM 11548 / VA1).